Consider the following 136-residue polypeptide: Large ribosomal subunit protein uL16c (136 aa).

It belongs to the universal ribosomal protein uL16 family. As to quaternary structure, part of the 50S ribosomal subunit.

The protein localises to the plastid. It localises to the chloroplast. This Oryza nivara (Indian wild rice) protein is Large ribosomal subunit protein uL16c.